The primary structure comprises 629 residues: MEEGGYAFEVNNGRPTASEFGTTARISSPSLTMSSSFREGGGGGGSKGLTRRRSMKPSFDADNEFITLLHGSDPVKVELNRLENDVRDKDRELSESQAEIKALRLSERQREKAVEELTEELGKMSEKLKLTENLLDSKNLEIKKINEEKRASMAAQFAAEATLRRVHAAQKDDDMPPIEAILAPLEAELKLARHEIVKLQDDNRALDRLTKSKEAALLDAERTVQSALAKASMVDDLQNKNQELMKQIEICQEENRILDKLHRQKVAEVEKFTQTVRELEEAVLAGGTAANAVRDYQRKFQEMNEERRILDRELARAKVSASRVATVVANEWKDGSDKVMPVKQWLEERRFLQGEMQQLRDKLAIADRAAKSEAQLKEKFQLRLRVLEESLRGPSSSGNRSTPEGRSMSNGPSRRQSLGGADIIPKLTSNGFFSKRSPSSQFRSLNASTSTILKHAKGTSRSFDGGSRSLDRSKVLTNEPRSKFPLNQSSEGTSGGGSPNSTKQGDSEKAAGTNNDSVPGVLHDLLQKEVITLRKAANDKDQSLRDKDEAIEMLAKKVETLTKAMEVEAKKMRREVAAMEKEVSAMRVDNKGSDSRTRRHSTNSKGASTTAQLLSGRGSGRMGMTRSTQ.

The disordered stretch occupies residues 1–54 (MEEGGYAFEVNNGRPTASEFGTTARISSPSLTMSSSFREGGGGGGSKGLTRRRS). Over residues 13-33 (GRPTASEFGTTARISSPSLTM) the composition is skewed to polar residues. A coiled-coil region spans residues 75–375 (VKVELNRLEN…ADRAAKSEAQ (301 aa)). A required for targeting to microtubules region spans residues 257–493 (ILDKLHRQKV…FPLNQSSEGT (237 aa)). 3 disordered regions span residues 391–421 (LRGPSSSGNRSTPEGRSMSNGPSRRQSLGGA), 458–519 (GTSR…DSVP), and 578–629 (AMEK…RSTQ). Over residues 393–416 (GPSSSGNRSTPEGRSMSNGPSRRQ) the composition is skewed to polar residues. Residues 544–592 (LRDKDEAIEMLAKKVETLTKAMEVEAKKMRREVAAMEKEVSAMRVDNKG) are a coiled coil. Residues 578–596 (AMEKEVSAMRVDNKGSDSR) show a composition bias toward basic and acidic residues. Over residues 603–613 (NSKGASTTAQL) the composition is skewed to polar residues.

The protein belongs to the MAP70 family.

It is found in the cytoplasm. Its subcellular location is the cytoskeleton. Functionally, plant-specific protein that interact with microtubules. This Arabidopsis thaliana (Mouse-ear cress) protein is Microtubule-associated protein 70-3 (MAP70.3).